The sequence spans 478 residues: MNLYIYNTLSRKKERFVPLNCKSVKMYVCGPTVYDIPHIGNARSVVVYDLLYRVLSLLYGRQNITYVRNITDIDDKIINRAKELKISIFKLTHETTIKFHEDMSYLGCCNPTIEPKATDNIDVMINIITSLIQTGNAYSTDDGHVYFAVKTFQDYNLLSRRTFDSMILNSRESSEPQKSYFADFVLWKPANADNEDIDAVFDSPWGKGRPGWHIECSAMSYKFLGENFDIHGGGADLIFPHHTNEIAQSRCAFPESRHALYWVHNGFLTVKGEKMSKSLNNFVTVRDLQKQNINGAAVRLMFLSTHYRKPLDFNDKSLNDAKNIINYLYDTIDSVNGTAQQQDNIKAEFKGNAFTVEFISALLDDLNSPKAIACLLNIAKQIRRQNQSEDKLALTQALLYASNLLGILHNYQFIKDSNDVKDNSNVTPHEIDLLIAKRIQAKQDKDWNLADQIRSQLLSNGISLTDKADGTTSWKVIK.

Zn(2+) is bound at residue Cys29. The 'HIGH' region signature appears at 31–41 (PTVYDIPHIGN). Residues Cys216, His241, and Glu245 each coordinate Zn(2+). The 'KMSKS' region signature appears at 274-278 (KMSKS). Lys277 is an ATP binding site.

The protein belongs to the class-I aminoacyl-tRNA synthetase family. In terms of assembly, monomer. The cofactor is Zn(2+).

The protein resides in the cytoplasm. It catalyses the reaction tRNA(Cys) + L-cysteine + ATP = L-cysteinyl-tRNA(Cys) + AMP + diphosphate. In Orientia tsutsugamushi (strain Ikeda) (Rickettsia tsutsugamushi), this protein is Cysteine--tRNA ligase.